Consider the following 392-residue polypeptide: Formate-dependent phosphoribosylglycinamide formyltransferase (392 aa).

N(1)-(5-phospho-beta-D-ribosyl)glycinamide is bound by residues 22–23 (EL) and glutamate 82. ATP contacts are provided by residues arginine 114, lysine 155, 160–165 (SSGKGQ), 195–198 (EGVV), and glutamate 203. Positions 119-308 (RLAAEELQLP…EFALHVRAFL (190 aa)) constitute an ATP-grasp domain. Mg(2+) contacts are provided by glutamate 267 and glutamate 279. Residues aspartate 286, lysine 355, and 362 to 363 (RR) contribute to the N(1)-(5-phospho-beta-D-ribosyl)glycinamide site.

It belongs to the PurK/PurT family. As to quaternary structure, homodimer.

The enzyme catalyses N(1)-(5-phospho-beta-D-ribosyl)glycinamide + formate + ATP = N(2)-formyl-N(1)-(5-phospho-beta-D-ribosyl)glycinamide + ADP + phosphate + H(+). It functions in the pathway purine metabolism; IMP biosynthesis via de novo pathway; N(2)-formyl-N(1)-(5-phospho-D-ribosyl)glycinamide from N(1)-(5-phospho-D-ribosyl)glycinamide (formate route): step 1/1. Functionally, involved in the de novo purine biosynthesis. Catalyzes the transfer of formate to 5-phospho-ribosyl-glycinamide (GAR), producing 5-phospho-ribosyl-N-formylglycinamide (FGAR). Formate is provided by PurU via hydrolysis of 10-formyl-tetrahydrofolate. The sequence is that of Formate-dependent phosphoribosylglycinamide formyltransferase from Shigella dysenteriae serotype 1 (strain Sd197).